We begin with the raw amino-acid sequence, 372 residues long: MAKRDFYEVLGVTKTCTEAEMKVAFRKAAMQWHPDRNPGNEEAEIQFKEINEAYQTLSDGQKRAAYDRYGHAAFEHGGGGNDGFASSMADIFDDLFGDVMGRRGGRNGPARGSDLRYNMEITLEEAFQGKLASLTLPTSITCEACDGTGAKAGAKPRICPTCGGQGRVRAQQGFFAIERTCPQCHGRGEIIDDPCQACGGAGRVTRERTLSVNIPPGVEDGTRIRLAGEGEAGTRGGPAGDLYIFVSTKPHPFFQRDGADLFCRVPISMTQAALGGEVTVHTIDGKEAKVKISEGTQSGKQFKLKNKGMPVLRSREVGDLYIQATVETPQNLTKRQRELLAEFDAESSNKTHPEASGFFARMKDFFENLSGQ.

Residues 5 to 70 (DFYEVLGVTK…QKRAAYDRYG (66 aa)) form the J domain. Residues 129–207 (GKLASLTLPT…CGGAGRVTRE (79 aa)) form a CR-type zinc finger. Zn(2+) contacts are provided by Cys142, Cys145, Cys159, Cys162, Cys181, Cys184, Cys195, and Cys198. CXXCXGXG motif repeat units lie at residues 142 to 149 (CEACDGTG), 159 to 166 (CPTCGGQG), 181 to 188 (CPQCHGRG), and 195 to 202 (CQACGGAG).

Belongs to the DnaJ family. In terms of assembly, homodimer. Zn(2+) is required as a cofactor.

The protein localises to the cytoplasm. In terms of biological role, participates actively in the response to hyperosmotic and heat shock by preventing the aggregation of stress-denatured proteins and by disaggregating proteins, also in an autonomous, DnaK-independent fashion. Unfolded proteins bind initially to DnaJ; upon interaction with the DnaJ-bound protein, DnaK hydrolyzes its bound ATP, resulting in the formation of a stable complex. GrpE releases ADP from DnaK; ATP binding to DnaK triggers the release of the substrate protein, thus completing the reaction cycle. Several rounds of ATP-dependent interactions between DnaJ, DnaK and GrpE are required for fully efficient folding. Also involved, together with DnaK and GrpE, in the DNA replication of plasmids through activation of initiation proteins. This Beijerinckia indica subsp. indica (strain ATCC 9039 / DSM 1715 / NCIMB 8712) protein is Chaperone protein DnaJ.